A 363-amino-acid chain; its full sequence is Glutamate 5-kinase (363 aa).

Lys6 is a binding site for ATP. The substrate site is built by Ser46, Asp133, and Asn145. ATP is bound by residues 165–166 (TD) and 207–213 (TGGMHTK). The PUA domain maps to 271–349 (HGRLLLDGGA…REIEALLGYT (79 aa)).

The protein belongs to the glutamate 5-kinase family.

Its subcellular location is the cytoplasm. It carries out the reaction L-glutamate + ATP = L-glutamyl 5-phosphate + ADP. The protein operates within amino-acid biosynthesis; L-proline biosynthesis; L-glutamate 5-semialdehyde from L-glutamate: step 1/2. In terms of biological role, catalyzes the transfer of a phosphate group to glutamate to form L-glutamate 5-phosphate. This chain is Glutamate 5-kinase, found in Deinococcus radiodurans (strain ATCC 13939 / DSM 20539 / JCM 16871 / CCUG 27074 / LMG 4051 / NBRC 15346 / NCIMB 9279 / VKM B-1422 / R1).